We begin with the raw amino-acid sequence, 105 residues long: U-scoloptoxin(16)-Sm4a (105 aa).

The signal sequence occupies residues 1-22 (MWALTVFVTILAAAIPITGVTG).

It belongs to the scoloptoxin-16 family. Post-translationally, contains 4 disulfide bonds. Expressed by the venom gland.

Its subcellular location is the secreted. This Scolopendra morsitans (Tanzanian blue ringleg centipede) protein is U-scoloptoxin(16)-Sm4a.